The sequence spans 156 residues: Ribosomal RNA large subunit methyltransferase H (156 aa).

S-adenosyl-L-methionine contacts are provided by residues Leu-72, Gly-104, and 123–128; that span reads FGAMVW.

This sequence belongs to the RNA methyltransferase RlmH family. As to quaternary structure, homodimer.

It is found in the cytoplasm. It catalyses the reaction pseudouridine(1915) in 23S rRNA + S-adenosyl-L-methionine = N(3)-methylpseudouridine(1915) in 23S rRNA + S-adenosyl-L-homocysteine + H(+). Its function is as follows. Specifically methylates the pseudouridine at position 1915 (m3Psi1915) in 23S rRNA. The chain is Ribosomal RNA large subunit methyltransferase H from Dinoroseobacter shibae (strain DSM 16493 / NCIMB 14021 / DFL 12).